The sequence spans 283 residues: D-alanine aminotransferase (283 aa).

Position 32 (Tyr32) interacts with substrate. Position 51 (Arg51) interacts with pyridoxal 5'-phosphate. The substrate site is built by Arg99 and His101. The Proton acceptor role is filled by Lys146. Lys146 carries the N6-(pyridoxal phosphate)lysine modification. Position 178 (Glu178) interacts with pyridoxal 5'-phosphate.

The protein belongs to the class-IV pyridoxal-phosphate-dependent aminotransferase family. As to quaternary structure, homodimer. Pyridoxal 5'-phosphate is required as a cofactor.

The catalysed reaction is D-alanine + 2-oxoglutarate = D-glutamate + pyruvate. Acts on the D-isomers of alanine, leucine, aspartate, glutamate, aminobutyrate, norvaline and asparagine. The enzyme transfers an amino group from a substrate D-amino acid to the pyridoxal phosphate cofactor to form pyridoxamine and an alpha-keto acid in the first half-reaction. The second-half reaction is the reverse of the first, transferring the amino group from the pyridoxamine to a second alpha-keto acid to form the product D-amino acid via a ping-pong mechanism. This is an important process in the formation of D-alanine and D-glutamate, which are essential bacterial cell wall components. The polypeptide is D-alanine aminotransferase (dat) (Bacillus sp. (strain YM-1)).